We begin with the raw amino-acid sequence, 471 residues long: Cytochrome b-c1 complex subunit 1, mitochondrial (471 aa).

The protein belongs to the peptidase M16 family.

The protein localises to the mitochondrion matrix. The chain is Cytochrome b-c1 complex subunit 1, mitochondrial (ucr-1) from Caenorhabditis elegans.